The chain runs to 397 residues: Elongation factor Tu (397 aa).

The tr-type G domain occupies 10 to 207; the sequence is KPHVNIGTIG…AVDESIPEPV (198 aa). Residues 19 to 26 form a G1 region; sequence GHVDHGKT. Residue 19–26 participates in GTP binding; it reads GHVDHGKT. Position 26 (threonine 26) interacts with Mg(2+). Residues 63-67 are G2; sequence GITIN. Positions 84–87 are G3; it reads DAPG. GTP-binding positions include 84–88 and 139–142; these read DAPGH and NKSD. The tract at residues 139-142 is G4; that stretch reads NKSD. Positions 177 to 179 are G5; it reads SGL.

Belongs to the TRAFAC class translation factor GTPase superfamily. Classic translation factor GTPase family. EF-Tu/EF-1A subfamily. In terms of assembly, monomer.

It is found in the cytoplasm. It catalyses the reaction GTP + H2O = GDP + phosphate + H(+). Its function is as follows. GTP hydrolase that promotes the GTP-dependent binding of aminoacyl-tRNA to the A-site of ribosomes during protein biosynthesis. This chain is Elongation factor Tu, found in Clavibacter sepedonicus (Clavibacter michiganensis subsp. sepedonicus).